The following is a 418-amino-acid chain: Histidine--tRNA ligase (418 aa).

Belongs to the class-II aminoacyl-tRNA synthetase family. As to quaternary structure, homodimer.

It localises to the cytoplasm. The catalysed reaction is tRNA(His) + L-histidine + ATP = L-histidyl-tRNA(His) + AMP + diphosphate + H(+). In Thermosipho africanus (strain TCF52B), this protein is Histidine--tRNA ligase.